A 365-amino-acid chain; its full sequence is Endophilin-B1 (365 aa).

N-acetylmethionine is present on M1. Residues 1–30 are membrane-binding amphipathic helix; sequence MNIMDFNVKKLAADAGTFLSRAVQFTEEKL. Positions 1-37 are required for membrane binding; that stretch reads MNIMDFNVKKLAADAGTFLSRAVQFTEEKLGQAEKTE. Positions 27–261 constitute a BAR domain; that stretch reads EEKLGQAEKT…LGSFPSNYLS (235 aa). The residue at position 145 (T145) is a Phosphothreonine; by CDK5. The stretch at 155-195 forms a coiled coil; it reads YKTIAKERKLLQNKRLDLDAAKTRLKKAKAAETRNSSEQEL. One can recognise an SH3 domain in the interval 305 to 365; the sequence is SGSRKARVLY…VPITYLELLN (61 aa).

Belongs to the endophilin family. In terms of assembly, homodimer, and heterodimer with SH3GLB2. Binds BAX; induction of apoptosis augments BAX binding. Binds DNM1, HTT, AMPH, BIN1 and ARFGAP1. Interacts with UVRAG; UVRAG bridges the interaction to BECN1 indicative for an association with the PI3K complex II (PI3KC3-C2). Phosphorylated at Thr-145 by CDK5; this phosphorylation is required for autophagy induction in starved neurons and facilitates homodimerization. As to expression, highly expressed in heart, skeletal muscle, kidney and placenta. Detected at lower levels in brain, colon, thymus, spleen, liver, small intestine, lung and peripheral blood leukocytes.

It is found in the cytoplasm. The protein resides in the golgi apparatus membrane. The protein localises to the mitochondrion outer membrane. It localises to the cytoplasmic vesicle. Its subcellular location is the autophagosome membrane. It is found in the midbody. May be required for normal outer mitochondrial membrane dynamics. Required for coatomer-mediated retrograde transport in certain cells. May recruit other proteins to membranes with high curvature. May promote membrane fusion. Involved in activation of caspase-dependent apoptosis by promoting BAX/BAK1 activation. Isoform 1 acts proapoptotic in fibroblasts. Involved in caspase-independent apoptosis during nutrition starvation and involved in the regulation of autophagy. Activates lipid kinase activity of PIK3C3 during autophagy probably by associating with the PI3K complex II (PI3KC3-C2). Associated with PI3KC3-C2 during autophagy may regulate the trafficking of ATG9A from the Golgi complex to the peripheral cytoplasm for the formation of autophagosomes by inducing Golgi membrane tubulation and fragmentation. Involved in regulation of degradative endocytic trafficking and cytokinesis, probably in the context of PI3KC3-C2. Isoform 2 acts antiapoptotic in neuronal cells; involved in maintenance of mitochondrial morphology and promotes neuronal viability. This Homo sapiens (Human) protein is Endophilin-B1 (SH3GLB1).